Consider the following 530-residue polypeptide: 2,3-bisphosphoglycerate-independent phosphoglycerate mutase (530 aa).

2 residues coordinate Mn(2+): Asp-15 and Ser-65. The active-site Phosphoserine intermediate is the Ser-65. Substrate-binding positions include His-126, Arg-155 to Asp-156, Arg-187, Arg-193, Arg-257 to Arg-260, and Lys-330. Mn(2+) contacts are provided by Asp-397, His-401, Asp-438, His-439, and His-456.

This sequence belongs to the BPG-independent phosphoglycerate mutase family. In terms of assembly, monomer. Mn(2+) serves as cofactor.

The catalysed reaction is (2R)-2-phosphoglycerate = (2R)-3-phosphoglycerate. The protein operates within carbohydrate degradation; glycolysis; pyruvate from D-glyceraldehyde 3-phosphate: step 3/5. Catalyzes the interconversion of 2-phosphoglycerate and 3-phosphoglycerate. This Synechococcus sp. (strain JA-2-3B'a(2-13)) (Cyanobacteria bacterium Yellowstone B-Prime) protein is 2,3-bisphosphoglycerate-independent phosphoglycerate mutase.